We begin with the raw amino-acid sequence, 246 residues long: Probable transcriptional regulatory protein CKO_01097 (246 aa).

A disordered region spans residues 1-20 (MAGHSKWANTRHRKAAQDAK).

This sequence belongs to the TACO1 family.

Its subcellular location is the cytoplasm. This is Probable transcriptional regulatory protein CKO_01097 from Citrobacter koseri (strain ATCC BAA-895 / CDC 4225-83 / SGSC4696).